Consider the following 215-residue polypeptide: Pyridoxine/pyridoxamine 5'-phosphate oxidase (215 aa).

Substrate-binding positions include 9 to 12 (RRDY) and K69. FMN contacts are provided by residues 64-69 (RVLLLK), 79-80 (FT), K86, and Q108. Substrate contacts are provided by Y126, R130, and S134. Residues 143 to 144 (QS) and W188 contribute to the FMN site. 194–196 (RLH) is a substrate binding site. Position 198 (R198) interacts with FMN.

Belongs to the pyridoxamine 5'-phosphate oxidase family. As to quaternary structure, homodimer. It depends on FMN as a cofactor.

The enzyme catalyses pyridoxamine 5'-phosphate + O2 + H2O = pyridoxal 5'-phosphate + H2O2 + NH4(+). It carries out the reaction pyridoxine 5'-phosphate + O2 = pyridoxal 5'-phosphate + H2O2. It functions in the pathway cofactor metabolism; pyridoxal 5'-phosphate salvage; pyridoxal 5'-phosphate from pyridoxamine 5'-phosphate: step 1/1. The protein operates within cofactor metabolism; pyridoxal 5'-phosphate salvage; pyridoxal 5'-phosphate from pyridoxine 5'-phosphate: step 1/1. Functionally, catalyzes the oxidation of either pyridoxine 5'-phosphate (PNP) or pyridoxamine 5'-phosphate (PMP) into pyridoxal 5'-phosphate (PLP). The protein is Pyridoxine/pyridoxamine 5'-phosphate oxidase of Pseudomonas entomophila (strain L48).